A 1001-amino-acid polypeptide reads, in one-letter code: Sarcoplasmic/endoplasmic reticulum calcium ATPase 1 (1001 aa).

4 consecutive transmembrane segments (helical) span residues Leu-49–Ala-69, Glu-90–Arg-110, Asp-254–Leu-273, and Phe-296–Ala-313. 4 residues coordinate Ca(2+): Val-304, Ala-305, Ile-307, and Glu-309. Residue Asp-351 is the 4-aspartylphosphate intermediate of the active site. Mg(2+) contacts are provided by Asp-351 and Thr-353. Thr-353 provides a ligand contact to ATP. Phosphothreonine is present on Thr-441. ATP contacts are provided by Glu-442, Arg-489, Lys-515, and Arg-560. At Thr-569 the chain carries Phosphothreonine. Ser-581 bears the Phosphoserine mark. ATP contacts are provided by Thr-625, Gly-626, Asp-627, Arg-678, and Lys-684. Asp-703 serves as a coordination point for Mg(2+). Asn-706 is a binding site for ATP. A run of 3 helical transmembrane segments spans residues Lys-758–Leu-777, Ile-788–Gly-808, and Ile-829–Ala-851. Ca(2+) is bound by residues Asn-768, Glu-771, Asn-796, Thr-799, and Asp-800. An interaction with PLN region spans residues Ile-788–Gly-808. An intrachain disulfide couples Cys-876 to Cys-888. 3 consecutive transmembrane segments (helical) span residues Thr-898 to Ser-917, Ile-931 to Tyr-949, and Thr-965 to Lys-985. Glu-908 serves as a coordination point for Ca(2+). Residues Trp-932–Leu-943 are interaction with PLN.

This sequence belongs to the cation transport ATPase (P-type) (TC 3.A.3) family. Type IIA subfamily. In terms of assembly, interacts with sarcolipin (SLN). Interacts with phospholamban (PLN). Interacts with myoregulin (MRLN). Interacts with DWORF. Interacts with VMP1. The cofactor is Mg(2+). Skeletal muscle, fast twitch muscle (type II) fibers.

It is found in the endoplasmic reticulum membrane. The protein resides in the sarcoplasmic reticulum membrane. It catalyses the reaction Ca(2+)(in) + ATP + H2O = Ca(2+)(out) + ADP + phosphate + H(+). Its activity is regulated as follows. Inhibited by sarcolipin (SLN) and myoregulin (MRLN). Has also been shown to be reversibly inhibited by phospholamban (PLN) at low calcium concentrations in vitro. Dephosphorylated PLN decreases the apparent affinity of the ATPase for calcium and this inhibition is regulated by the phosphorylation of PLN in vitro. Enhanced by DWORF; DWORF increases activity by displacing sarcolipin (SLN), phospholamban (PLN) and myoregulin (MRLN). Functionally, key regulator of striated muscle performance by acting as the major Ca(2+) ATPase responsible for the reuptake of cytosolic Ca(2+) into the sarcoplasmic reticulum. Catalyzes the hydrolysis of ATP coupled with the translocation of calcium from the cytosol to the sarcoplasmic reticulum lumen. Contributes to calcium sequestration involved in muscular excitation/contraction. This is Sarcoplasmic/endoplasmic reticulum calcium ATPase 1 from Homo sapiens (Human).